Consider the following 20-residue polypeptide: Malate dehydrogenase (20 aa).

Residue 8-14 (GAAGQIG) participates in NAD(+) binding.

The protein belongs to the LDH/MDH superfamily. MDH type 2 family.

It catalyses the reaction (S)-malate + NAD(+) = oxaloacetate + NADH + H(+). In terms of biological role, catalyzes the reversible oxidation of malate to oxaloacetate. This chain is Malate dehydrogenase (mdh), found in Microtetraspora glauca.